We begin with the raw amino-acid sequence, 93 residues long: Small ribosomal subunit protein uS15 (93 aa).

The protein belongs to the universal ribosomal protein uS15 family. In terms of assembly, part of the 30S ribosomal subunit. Forms a bridge to the 50S subunit in the 70S ribosome, contacting the 23S rRNA.

One of the primary rRNA binding proteins, it binds directly to 16S rRNA where it helps nucleate assembly of the platform of the 30S subunit by binding and bridging several RNA helices of the 16S rRNA. Functionally, forms an intersubunit bridge (bridge B4) with the 23S rRNA of the 50S subunit in the ribosome. This chain is Small ribosomal subunit protein uS15, found in Anaplasma marginale (strain Florida).